A 309-amino-acid polypeptide reads, in one-letter code: Ribosomal RNA small subunit methyltransferase H (309 aa).

Residues 33-35 (GGH), aspartate 53, phenylalanine 79, aspartate 100, and glutamine 107 each bind S-adenosyl-L-methionine.

Belongs to the methyltransferase superfamily. RsmH family.

It is found in the cytoplasm. It carries out the reaction cytidine(1402) in 16S rRNA + S-adenosyl-L-methionine = N(4)-methylcytidine(1402) in 16S rRNA + S-adenosyl-L-homocysteine + H(+). Functionally, specifically methylates the N4 position of cytidine in position 1402 (C1402) of 16S rRNA. The polypeptide is Ribosomal RNA small subunit methyltransferase H (Clostridium botulinum (strain Loch Maree / Type A3)).